The sequence spans 227 residues: Ubiquitin domain-containing protein 1 (227 aa).

The segment at 1 to 35 (MGNCVGRQRRERPAAPGHPRKRAGRNEPLKKERLK) is disordered. Positions 24-35 (GRNEPLKKERLK) are enriched in basic and acidic residues. The Ubiquitin-like domain maps to 149 to 224 (FPLKVRLSTG…IQVIINQPPP (76 aa)).

Interacts with UBTD1.

Its function is as follows. May be involved in the regulation of cellular senescence through a positive feedback loop with TP53. Is a TP53 downstream target gene that increases the stability of TP53 protein by promoting the ubiquitination and degradation of MDM2. In Homo sapiens (Human), this protein is Ubiquitin domain-containing protein 1 (UBTD1).